The following is a 158-amino-acid chain: UPF0260 protein RL1394 (158 aa).

Belongs to the UPF0260 family.

The polypeptide is UPF0260 protein RL1394 (Rhizobium johnstonii (strain DSM 114642 / LMG 32736 / 3841) (Rhizobium leguminosarum bv. viciae)).